Reading from the N-terminus, the 548-residue chain is Chaperonin GroEL (548 aa).

ATP is bound by residues 29–32 (TMGP), Lys50, 86–90 (DGTTT), Gly414, 478–480 (NAA), and Asp494.

It belongs to the chaperonin (HSP60) family. In terms of assembly, forms a cylinder of 14 subunits composed of two heptameric rings stacked back-to-back. Interacts with the co-chaperonin GroES.

It is found in the cytoplasm. It carries out the reaction ATP + H2O + a folded polypeptide = ADP + phosphate + an unfolded polypeptide.. In terms of biological role, together with its co-chaperonin GroES, plays an essential role in assisting protein folding. The GroEL-GroES system forms a nano-cage that allows encapsulation of the non-native substrate proteins and provides a physical environment optimized to promote and accelerate protein folding. This chain is Chaperonin GroEL, found in Legionella pneumophila (strain Corby).